The sequence spans 142 residues: HTH-type transcriptional regulator MntR (142 aa).

Residues 1–63 (MPTPSMEDYI…YEKYRGLVLT (63 aa)) enclose the HTH dtxR-type domain. The Mn(2+) site is built by Asp8, Glu11, His77, Glu99, Glu102, and His103.

It belongs to the DtxR/MntR family. Homodimer.

The protein resides in the cytoplasm. With respect to regulation, DNA binding is strongly activated by Mn(2+). Central regulator of manganese homeostasis. This is HTH-type transcriptional regulator MntR from Bacillus cytotoxicus (strain DSM 22905 / CIP 110041 / 391-98 / NVH 391-98).